A 727-amino-acid chain; its full sequence is Probable acyl-activating enzyme 18, peroxisomal (727 aa).

A Microbody targeting signal motif is present at residues 725-727 (SRI).

This sequence belongs to the ATP-dependent AMP-binding enzyme family. In terms of tissue distribution, expressed in flowers.

The protein localises to the peroxisome. In terms of biological role, may be involved in the peroxisomal activation of 2,4-dichlorophenoxybutyric acid (2,4-DB), a precursor of active auxins that inhibit root growth. The protein is Probable acyl-activating enzyme 18, peroxisomal (AAE18) of Arabidopsis thaliana (Mouse-ear cress).